The chain runs to 75 residues: Protein Tlp homolog (75 aa).

The interval 48–75 (KNQRRREALDGMREEIKDEARDKKNGYM) is disordered.

The protein belongs to the Tlp family.

The chain is Protein Tlp homolog from Clostridium botulinum (strain 657 / Type Ba4).